Consider the following 26-residue polypeptide: Delta-hemolysin (26 aa).

The residue at position 1 (M1) is an N-formylmethionine.

Belongs to the delta-lysin family.

It localises to the secreted. The protein localises to the host cell membrane. Functionally, lyses erythrocytes and many other mammalian cells. In Staphylococcus aureus (strain Mu50 / ATCC 700699), this protein is Delta-hemolysin (hld).